The primary structure comprises 149 residues: Calmodulin-3 (149 aa).

A2 is subject to N-acetylalanine. EF-hand domains follow at residues 8–43, 44–79, 81–116, and 117–149; these read DQIA…LGQN, PTEA…KMKD, DSEE…LGEK, and LTDE…MMAK. Ca(2+) contacts are provided by D21, D23, D25, C27, E32, D57, D59, N61, T63, E68, D94, D96, N98, and E105. The residue at position 116 (K116) is an N6,N6,N6-trimethyllysine. Residues D130, D132, D134, Q136, and E141 each contribute to the Ca(2+) site.

Belongs to the calmodulin family.

Its function is as follows. Calmodulin mediates the control of a large number of enzymes, ion channels and other proteins by Ca(2+). Among the enzymes to be stimulated by the calmodulin-Ca(2+) complex are a number of protein kinases and phosphatases. In Oryza sativa subsp. japonica (Rice), this protein is Calmodulin-3 (CAM3).